The chain runs to 180 residues: tRNA (cytidine(56)-2'-O)-methyltransferase (180 aa).

S-adenosyl-L-methionine contacts are provided by residues leucine 85, 114-118, and 132-139; these read GAEKV and VGNQPHSE.

This sequence belongs to the aTrm56 family. In terms of assembly, homodimer.

The protein localises to the cytoplasm. It carries out the reaction cytidine(56) in tRNA + S-adenosyl-L-methionine = 2'-O-methylcytidine(56) in tRNA + S-adenosyl-L-homocysteine + H(+). Functionally, specifically catalyzes the AdoMet-dependent 2'-O-ribose methylation of cytidine at position 56 in tRNAs. The polypeptide is tRNA (cytidine(56)-2'-O)-methyltransferase (Thermococcus kodakarensis (strain ATCC BAA-918 / JCM 12380 / KOD1) (Pyrococcus kodakaraensis (strain KOD1))).